Here is a 459-residue protein sequence, read N- to C-terminus: Ribosomal protein uS12 methylthiotransferase RimO (459 aa).

Residues 11 to 126 (PKVGMVSLGC…VMQAVHSHLP (116 aa)) enclose the MTTase N-terminal domain. Positions 20, 56, 85, 157, 161, and 164 each coordinate [4Fe-4S] cluster. One can recognise a Radical SAM core domain in the interval 143-388 (LTPRHYAYLK…MEVAEEVSAA (246 aa)). A TRAM domain is found at 391–459 (ARKVGKTLKV…ADGHDLWGEV (69 aa)).

The protein belongs to the methylthiotransferase family. RimO subfamily. It depends on [4Fe-4S] cluster as a cofactor.

The protein resides in the cytoplasm. The enzyme catalyses L-aspartate(89)-[ribosomal protein uS12]-hydrogen + (sulfur carrier)-SH + AH2 + 2 S-adenosyl-L-methionine = 3-methylsulfanyl-L-aspartate(89)-[ribosomal protein uS12]-hydrogen + (sulfur carrier)-H + 5'-deoxyadenosine + L-methionine + A + S-adenosyl-L-homocysteine + 2 H(+). In terms of biological role, catalyzes the methylthiolation of an aspartic acid residue of ribosomal protein uS12. The chain is Ribosomal protein uS12 methylthiotransferase RimO from Burkholderia pseudomallei (strain K96243).